We begin with the raw amino-acid sequence, 470 residues long: Shutoff alkaline exonuclease (470 aa).

The protein belongs to the herpesviridae alkaline nuclease family. Forms a complex with the DNA polymerase, the DNA polymerase processivity factor, and the major DNA binding protein.

Its subcellular location is the host nucleus. The protein localises to the host cytoplasm. In terms of biological role, plays a role in processing non linear or branched viral DNA intermediates in order to promote the production of mature packaged unit-length linear progeny viral DNA molecules. Exhibits endonuclease and exonuclease activities and accepts both double-stranded and single-stranded DNA as substrate. Exonuclease digestion of DNA is in the 5'-&gt; 3' direction and the products are 5'-monophosphate nucleosides. Additionally, forms a recombinase with the major DNA-binding protein, which displays strand exchange activity. Also acts as a cytoplasmic RNA endonuclease that induces degradation of the majority of the cellular messenger RNAs during early lytic infection. The resulting inhibition of cellular protein synthesis serves to ensure maximal viral gene expression and evasion from host immune response. Internally cleaves host mRNAs which are then degraded by the cellular exonuclease XRN1. Bypasses therefore the regulatory steps of deadenylation and decapping normally required for XRN1 activation. This is Shutoff alkaline exonuclease from Epstein-Barr virus (strain GD1) (HHV-4).